A 490-amino-acid chain; its full sequence is Bifunctional protein HldE (490 aa).

The interval 1–330 (MNNFDTLLQS…RKILPHASLA (330 aa)) is ribokinase. An ATP-binding site is contributed by 205-208 (NRKE). Asp275 is an active-site residue. Residues 358 to 490 (FTNGCFDILH…LVEKAREGTS (133 aa)) are cytidylyltransferase.

In the N-terminal section; belongs to the carbohydrate kinase PfkB family. The protein in the C-terminal section; belongs to the cytidylyltransferase family. As to quaternary structure, homodimer.

It carries out the reaction D-glycero-beta-D-manno-heptose 7-phosphate + ATP = D-glycero-beta-D-manno-heptose 1,7-bisphosphate + ADP + H(+). The enzyme catalyses D-glycero-beta-D-manno-heptose 1-phosphate + ATP + H(+) = ADP-D-glycero-beta-D-manno-heptose + diphosphate. The protein operates within nucleotide-sugar biosynthesis; ADP-L-glycero-beta-D-manno-heptose biosynthesis; ADP-L-glycero-beta-D-manno-heptose from D-glycero-beta-D-manno-heptose 7-phosphate: step 1/4. Its pathway is nucleotide-sugar biosynthesis; ADP-L-glycero-beta-D-manno-heptose biosynthesis; ADP-L-glycero-beta-D-manno-heptose from D-glycero-beta-D-manno-heptose 7-phosphate: step 3/4. Catalyzes the phosphorylation of D-glycero-D-manno-heptose 7-phosphate at the C-1 position to selectively form D-glycero-beta-D-manno-heptose-1,7-bisphosphate. In terms of biological role, catalyzes the ADP transfer from ATP to D-glycero-beta-D-manno-heptose 1-phosphate, yielding ADP-D-glycero-beta-D-manno-heptose. The chain is Bifunctional protein HldE from Rhodopseudomonas palustris (strain HaA2).